The sequence spans 501 residues: Lysine--tRNA ligase (501 aa).

Residues Glu-402 and Glu-409 each coordinate Mg(2+).

Belongs to the class-II aminoacyl-tRNA synthetase family. In terms of assembly, homodimer. Mg(2+) is required as a cofactor.

The protein localises to the cytoplasm. It carries out the reaction tRNA(Lys) + L-lysine + ATP = L-lysyl-tRNA(Lys) + AMP + diphosphate. This chain is Lysine--tRNA ligase (lysS), found in Helicobacter pylori (strain ATCC 700392 / 26695) (Campylobacter pylori).